Reading from the N-terminus, the 381-residue chain is Tryptophan--tRNA ligase (381 aa).

The short motif at 82–90 (PSLGMHIGH) is the 'HIGH' region element. The short motif at 254 to 258 (KMSSS) is the 'KMSKS' region element.

The protein belongs to the class-I aminoacyl-tRNA synthetase family.

It is found in the cytoplasm. The catalysed reaction is tRNA(Trp) + L-tryptophan + ATP = L-tryptophyl-tRNA(Trp) + AMP + diphosphate + H(+). This chain is Tryptophan--tRNA ligase, found in Sulfurisphaera tokodaii (strain DSM 16993 / JCM 10545 / NBRC 100140 / 7) (Sulfolobus tokodaii).